Here is a 662-residue protein sequence, read N- to C-terminus: Acetyl-coenzyme A synthetase (662 aa).

Residues 197 to 200 and Thr-317 contribute to the CoA site; that span reads RKGK. ATP contacts are provided by residues 393-395, 417-422, Asp-510, and Arg-525; these read GEP and DTWWQT. Ser-533 contributes to the CoA binding site. Arg-536 is an ATP binding site. Positions 549 and 552 each coordinate Mg(2+). Position 623 is an N6-acetyllysine (Lys-623).

Belongs to the ATP-dependent AMP-binding enzyme family. Mg(2+) is required as a cofactor. Acetylated. Deacetylation by the SIR2-homolog deacetylase activates the enzyme.

The catalysed reaction is acetate + ATP + CoA = acetyl-CoA + AMP + diphosphate. In terms of biological role, catalyzes the conversion of acetate into acetyl-CoA (AcCoA), an essential intermediate at the junction of anabolic and catabolic pathways. AcsA undergoes a two-step reaction. In the first half reaction, AcsA combines acetate with ATP to form acetyl-adenylate (AcAMP) intermediate. In the second half reaction, it can then transfer the acetyl group from AcAMP to the sulfhydryl group of CoA, forming the product AcCoA. This chain is Acetyl-coenzyme A synthetase, found in Helicobacter pylori (strain G27).